The chain runs to 139 residues: MMWWALWCAVVVAAGSGVAAAPAPDSLSPLDMVQMDSSAPDDETLYAMSPMAARYSAGAPWLYLLADMPRDSQTGSGRVKRRMPSLSIDQPMSVLRQKLSQEMERKQQAFRAAVNRNFLNDIGKRGFQWTPSVQAVRYI.

Positions 1–20 (MMWWALWCAVVVAAGSGVAA) are cleaved as a signal peptide. The propeptide occupies 21–79 (APAPDSLSPLDMVQMDSSAPDDETLYAMSPMAARYSAGAPWLYLLADMPRDSQTGSGRV). Isoleucine 122 is modified (isoleucine amide).

This sequence belongs to the sauvagine/corticotropin-releasing factor/urotensin I family. In terms of tissue distribution, expressed in corpora cardiaca (CC), corpora allata (CA), antennal lobe (AL) and gnathal ganglion (GNG) (at protein level). Expression in CC and CA detected in all animals, in GNG in most animals, expression in AL detected in few animals (at protein level).

The protein resides in the secreted. Regulation of fluid secretion. This chain is Diuretic hormone 41, found in Agrotis ipsilon (Black cutworm moth).